Consider the following 596-residue polypeptide: V-type ATP synthase alpha chain (596 aa).

Residue 233-240 (GPFGAGKT) participates in ATP binding.

It belongs to the ATPase alpha/beta chains family.

The catalysed reaction is ATP + H2O + 4 H(+)(in) = ADP + phosphate + 5 H(+)(out). Produces ATP from ADP in the presence of a proton gradient across the membrane. The V-type alpha chain is a catalytic subunit. This is V-type ATP synthase alpha chain from Streptococcus sanguinis (strain SK36).